The following is a 195-amino-acid chain: Small ribosomal subunit protein uS10c (195 aa).

The transit peptide at 1-59 (MATSSISAALLSPLTLRNASSSSTKQDFSTLSSLNLRRTLTPTLQSGHTLSNSSNFATF) directs the protein to the chloroplast.

The protein belongs to the universal ribosomal protein uS10 family. As to quaternary structure, component of the chloroplast small ribosomal subunit (SSU). Mature 70S chloroplast ribosomes of higher plants consist of a small (30S) and a large (50S) subunit. The 30S small subunit contains 1 molecule of ribosomal RNA (16S rRNA) and 24 different proteins. The 50S large subunit contains 3 rRNA molecules (23S, 5S and 4.5S rRNA) and 33 different proteins.

Its subcellular location is the plastid. The protein resides in the chloroplast. Its function is as follows. Component of the chloroplast ribosome (chloro-ribosome), a dedicated translation machinery responsible for the synthesis of chloroplast genome-encoded proteins, including proteins of the transcription and translation machinery and components of the photosynthetic apparatus. This chain is Small ribosomal subunit protein uS10c (RPS10), found in Spinacia oleracea (Spinach).